The following is a 60-amino-acid chain: Cytotoxin 1 (60 aa).

Cystine bridges form between cysteine 3/cysteine 21, cysteine 14/cysteine 38, cysteine 42/cysteine 53, and cysteine 54/cysteine 59.

The protein belongs to the three-finger toxin family. Short-chain subfamily. Type IA cytotoxin sub-subfamily. Monomer in solution; Homodimer and oligomer in the presence of negatively charged lipids forming a pore with a size ranging between 20 and 30 Angstroms. Expressed by the venom gland.

The protein localises to the secreted. Its subcellular location is the target cell membrane. Shows cytolytic activity on many different cells by forming pore in lipid membranes. In vivo, increases heart rate or kills the animal by cardiac arrest. In addition, it binds to heparin with high affinity, interacts with Kv channel-interacting protein 1 (KCNIP1) in a calcium-independent manner, and binds to integrin alpha-V/beta-3 (ITGAV/ITGB3) with moderate affinity. The polypeptide is Cytotoxin 1 (Naja melanoleuca (Forest cobra)).